Reading from the N-terminus, the 1644-residue chain is Kinesin-like protein unc-104 (1644 aa).

Residues 3-351 (SVKVAVRVRP…LRYADRAKQI (349 aa)) enclose the Kinesin motor domain. Position 97–104 (97–104 (GQTGAGKS)) interacts with ATP. Residues 358–436 (NEDANAKLIR…IAELNETWEE (79 aa)) adopt a coiled-coil conformation. Positions 499–565 (TRLGTSEANV…LQTGSRVILG (67 aa)) constitute an FHA domain. Residues 574-591 (HPEQAREKREKPKDKDVG) are compositionally biased toward basic and acidic residues. Residues 574–598 (HPEQAREKREKPKDKDVGENPGGNA) are disordered. Residues 631–672 (EQFKREKLAADQEFEEQRKTYEARIDALQKQVEEQSMTMSMY) adopt a coiled-coil conformation. Disordered stretches follow at residues 953–985 (EQED…LQPG) and 1419–1440 (HMVI…TLPE). Positions 969–984 (ELHESNEHEPGEHLQP) are enriched in basic and acidic residues. Residues 1428–1437 (TPVKDQQTPT) show a composition bias toward polar residues. The PH domain occupies 1542–1640 (VVARKGYLNV…WLYAINPLLA (99 aa)).

The protein belongs to the TRAFAC class myosin-kinesin ATPase superfamily. Kinesin family. Unc-104 subfamily. In terms of assembly, monomer.

Its subcellular location is the cytoplasm. It localises to the cytoskeleton. Functionally, required for presynaptic maturation, has a role in axonal transport of dense-core vesicles carrying synaptic vesicle precursors, components required for the morphological transformation of axonal growth cones to mature boutons. The protein is Kinesin-like protein unc-104 of Aedes aegypti (Yellowfever mosquito).